The following is a 495-amino-acid chain: Probable cytochrome P450 508C1 (495 aa).

Residues 3–21 form a helical membrane-spanning segment; that stretch reads LLNSLLLLFLIYLIHSFYI. Cysteine 442 is a heme binding site.

The protein belongs to the cytochrome P450 family. Heme serves as cofactor.

It localises to the membrane. This is Probable cytochrome P450 508C1 (cyp508C1) from Dictyostelium discoideum (Social amoeba).